A 188-amino-acid chain; its full sequence is MAGNAYSDEVLGATNWLKEKSNQEVFSFVFKNENVQLNGKDIGWNSYKKELQEDELKSLQRGAETTWDQSEDMEWETTVDEMTKKFGTLTIHDTEKYASQPELCTNSTCIGSRGPGFRALEHTKYSCCGHCRNPEHWGSWFQSLPRWSTEPNLVRDRGGFESVLRCGTVEERLQRAAELGLRYDGASS.

As to quaternary structure, interacts with host SNRPN. Interacts with host XPO1.

It localises to the host nucleus. In terms of biological role, plays an essential role in viral protein synthesis. Plays also a role in active nuclear export of mature particles before host cell lysis, by interacting with host XPO1. This is Non-structural protein NS2 (NS2) from Mus musculus (Mouse).